The sequence spans 221 residues: Probable septum site-determining protein MinC (221 aa).

This sequence belongs to the MinC family. In terms of assembly, interacts with MinD and FtsZ.

Functionally, cell division inhibitor that blocks the formation of polar Z ring septums. Rapidly oscillates between the poles of the cell to destabilize FtsZ filaments that have formed before they mature into polar Z rings. Prevents FtsZ polymerization. The polypeptide is Probable septum site-determining protein MinC (Shewanella baltica (strain OS223)).